Consider the following 203-residue polypeptide: Recombination protein RecR (203 aa).

Residues 57-73 form a C4-type zinc finger; the sequence is CQSCGTLKSNSLGCNNC. Positions 81 to 175 constitute a Toprim domain; sequence NKICVVEDIA…KVTKLAQGLP (95 aa).

Belongs to the RecR family.

Its function is as follows. May play a role in DNA repair. It seems to be involved in an RecBC-independent recombinational process of DNA repair. It may act with RecF and RecO. The chain is Recombination protein RecR from Pelagibacter ubique (strain HTCC1062).